The sequence spans 399 residues: Probable 2,3-bisphosphoglycerate-independent phosphoglycerate mutase (399 aa).

Belongs to the BPG-independent phosphoglycerate mutase family. A-PGAM subfamily.

It catalyses the reaction (2R)-2-phosphoglycerate = (2R)-3-phosphoglycerate. The protein operates within carbohydrate degradation; glycolysis; pyruvate from D-glyceraldehyde 3-phosphate: step 3/5. Functionally, catalyzes the interconversion of 2-phosphoglycerate and 3-phosphoglycerate. This Geobacter sulfurreducens (strain ATCC 51573 / DSM 12127 / PCA) protein is Probable 2,3-bisphosphoglycerate-independent phosphoglycerate mutase.